We begin with the raw amino-acid sequence, 822 residues long: ATP-dependent zinc metalloprotease FtsH (822 aa).

Topologically, residues 1-76 (MEFNKLELLI…NQKEPGKARK (76 aa)) are cytoplasmic. Polar residues predominate over residues 44 to 54 (SLDQPSDAPSN). The disordered stretch occupies residues 44 to 71 (SLDQPSDAPSNNKKRNLDQPDNPNQKEP). The helical transmembrane segment at 77–97 (IIWSFIIIILVLGVLALIILS) threads the bilayer. The Extracellular segment spans residues 98–251 (GFSFSATSLN…QSMSLPTSYS (154 aa)). A helical membrane pass occupies residues 252–272 (FYTAASLVLSILPFILLIGII). Residues 273-822 (YYSMRKMGQA…SKESSSDKKK (550 aa)) lie on the Cytoplasmic side of the membrane. Position 347–354 (347–354 (GPPGTGKT)) interacts with ATP. Residue H569 coordinates Zn(2+). Residue E570 is part of the active site. Residues H573 and D648 each contribute to the Zn(2+) site. Residues 758 to 794 (KKELEEKKKAEDLIRKAKKESEASSKEEKEMDVEKKV) are compositionally biased toward basic and acidic residues. Residues 758 to 822 (KKELEEKKKA…SKESSSDKKK (65 aa)) are disordered. The span at 796–805 (KPSASSTEPT) shows a compositional bias: low complexity. Positions 812 to 822 (PSKESSSDKKK) are enriched in basic and acidic residues.

In the central section; belongs to the AAA ATPase family. The protein in the C-terminal section; belongs to the peptidase M41 family. In terms of assembly, homohexamer. Requires Zn(2+) as cofactor.

It is found in the cell membrane. In terms of biological role, acts as a processive, ATP-dependent zinc metallopeptidase for both cytoplasmic and membrane proteins. Plays a role in the quality control of integral membrane proteins. The sequence is that of ATP-dependent zinc metalloprotease FtsH from Malacoplasma penetrans (strain HF-2) (Mycoplasma penetrans).